Here is a 337-residue protein sequence, read N- to C-terminus: uncharacterized protein (337 aa).

Residues I3–N174 form the MurNAc-LAA domain.

To C.perfringens pIP404 ORF10.

This is an uncharacterized protein from Clostridium perfringens (strain 13 / Type A).